The primary structure comprises 341 residues: Enduracididine beta-hydroxylase (341 aa).

Residues His-146 and Glu-148 each coordinate Fe cation. The interval 203 to 223 (HRIHGKAPGDESARESALRER) is disordered. His-300 lines the Fe cation pocket.

The protein belongs to the clavaminate synthase family. It depends on Fe(2+) as a cofactor.

It carries out the reaction L-enduracididine + 2-oxoglutarate + O2 = (3S)-3-hydroxy-L-enduracididine + succinate + CO2. It participates in antibiotic biosynthesis. Hydroxylates the beta carbon of free L-enduracididine to produce (3S)-3-hydroxy-L-enduracididine in biosynthesis of the nonproteinogenic amino acid beta-hydroxyenduracididine, a component of antibiotic mannopeptimycin. This chain is Enduracididine beta-hydroxylase (mppO), found in Streptomyces hygroscopicus.